The chain runs to 223 residues: Adenylate kinase 4, mitochondrial (223 aa).

Gly15–Thr20 is an a ribonucleoside 5'-triphosphate binding site. Positions Ser35–Val64 are NMP. Positions 36 and 41 each coordinate AMP. Lys60 carries the post-translational modification N6-succinyllysine. AMP contacts are provided by residues Leu62 to Val64, Gly89 to Arg92, and Gln96. Positions Arg125–Asp162 are LID. Residues Arg126 and Val135–Tyr136 each bind a ribonucleoside 5'-triphosphate. Arg170 serves as a coordination point for AMP. The residue at position 175 (Lys175) is an N6-acetyllysine. N6-acetyllysine; alternate is present on residues Lys179 and Lys186. Residues Lys179 and Lys186 each carry the N6-succinyllysine; alternate modification. Thr199 contacts a ribonucleoside 5'-triphosphate.

It belongs to the adenylate kinase family. AK3 subfamily. In terms of assembly, monomer. Interacts with SLC25A5/ANT2.

Its subcellular location is the mitochondrion matrix. The enzyme catalyses a ribonucleoside 5'-phosphate + ATP = a ribonucleoside 5'-diphosphate + ADP. The catalysed reaction is AMP + ATP = 2 ADP. It carries out the reaction GTP + AMP = GDP + ADP. It catalyses the reaction CMP + ATP = CDP + ADP. The enzyme catalyses GTP + CMP = CDP + GDP. The catalysed reaction is dAMP + ATP = dADP + ADP. It carries out the reaction dCMP + ATP = dCDP + ADP. It catalyses the reaction a 2'-deoxyribonucleoside 5'-diphosphate + ATP = a 2'-deoxyribonucleoside 5'-triphosphate + ADP. The enzyme catalyses a ribonucleoside 5'-diphosphate + ATP = a ribonucleoside 5'-triphosphate + ADP. The catalysed reaction is GDP + ATP = GTP + ADP. It carries out the reaction CDP + GTP = CTP + GDP. It catalyses the reaction CDP + ATP = CTP + ADP. The enzyme catalyses UDP + ATP = UTP + ADP. The catalysed reaction is GTP + UDP = UTP + GDP. It carries out the reaction dADP + GTP = dATP + GDP. It catalyses the reaction dCDP + GTP = dCTP + GDP. The enzyme catalyses dCDP + ATP = dCTP + ADP. The catalysed reaction is dGDP + ATP = dGTP + ADP. It carries out the reaction dTDP + GTP = dTTP + GDP. It catalyses the reaction dTDP + ATP = dTTP + ADP. Its function is as follows. Broad-specificity mitochondrial nucleoside phosphate kinase involved in cellular nucleotide homeostasis by catalyzing nucleoside-phosphate interconversions. Similar to other adenylate kinases, preferentially catalyzes the phosphorylation of the nucleoside monophosphate AMP with ATP as phosphate donor to produce ADP. Phosphorylates only AMP when using GTP as phosphate donor. In vitro, can also catalyze the phosphorylation of CMP, dAMP and dCMP and use GTP as an alternate phosphate donor. Moreover, exhibits a diphosphate kinase activity, producing ATP, CTP, GTP, UTP, TTP, dATP, dCTP and dGTP from the corresponding diphosphate substrates with either ATP or GTP as phosphate donors. Plays a role in controlling cellular ATP levels by regulating phosphorylation and activation of the energy sensor protein kinase AMPK. Plays a protective role in the cellular response to oxidative stress. The protein is Adenylate kinase 4, mitochondrial of Pongo abelii (Sumatran orangutan).